A 619-amino-acid polypeptide reads, in one-letter code: Chaperone protein HscA homolog (619 aa).

The protein belongs to the heat shock protein 70 family.

Functionally, chaperone involved in the maturation of iron-sulfur cluster-containing proteins. Has a low intrinsic ATPase activity which is markedly stimulated by HscB. The protein is Chaperone protein HscA homolog of Pseudomonas paraeruginosa (strain DSM 24068 / PA7) (Pseudomonas aeruginosa (strain PA7)).